We begin with the raw amino-acid sequence, 564 residues long: Protein NRT1/ PTR FAMILY 5.16 (564 aa).

2 helical membrane passes run Phe-49–Ser-69 and Trp-80–Gly-100. Thr-104 carries the phosphothreonine modification. 10 helical membrane-spanning segments follow: residues Leu-110–Leu-130, Phe-145–Gly-165, Phe-192–Val-212, Trp-220–Phe-240, Ile-327–Phe-347, Ile-358–Phe-378, Ile-408–Lys-428, Ile-450–Gly-470, Ile-486–Ile-506, and Tyr-533–Ser-553.

Belongs to the major facilitator superfamily. Proton-dependent oligopeptide transporter (POT/PTR) (TC 2.A.17) family. In terms of tissue distribution, expressed in shoots and roots.

The protein localises to the membrane. The chain is Protein NRT1/ PTR FAMILY 5.16 (NPF5.16) from Arabidopsis thaliana (Mouse-ear cress).